The chain runs to 66 residues: Large ribosomal subunit protein bL33c (66 aa).

It belongs to the bacterial ribosomal protein bL33 family.

It is found in the plastid. The protein localises to the chloroplast. In Gossypium barbadense (Sea Island cotton), this protein is Large ribosomal subunit protein bL33c.